We begin with the raw amino-acid sequence, 270 residues long: Phosphonoacetaldehyde hydrolase (270 aa).

Asp11 acts as the Nucleophile in catalysis. Mg(2+)-binding residues include Asp11 and Ala13. Residue Lys53 is the Schiff-base intermediate with substrate of the active site. Position 187 (Asp187) interacts with Mg(2+).

Belongs to the HAD-like hydrolase superfamily. PhnX family. In terms of assembly, homodimer. The cofactor is Mg(2+).

It catalyses the reaction phosphonoacetaldehyde + H2O = acetaldehyde + phosphate + H(+). Involved in phosphonate degradation. This chain is Phosphonoacetaldehyde hydrolase, found in Salmonella enteritidis PT4 (strain P125109).